The following is a 201-amino-acid chain: Recombination protein RecR (201 aa).

The C4-type zinc-finger motif lies at 57–72; sequence CRYCRNLSDAEVCLLC. Positions 80–175 constitute a Toprim domain; it reads QQICVVETPA…QATRLAYGVP (96 aa).

The protein belongs to the RecR family.

Functionally, may play a role in DNA repair. It seems to be involved in an RecBC-independent recombinational process of DNA repair. It may act with RecF and RecO. The protein is Recombination protein RecR of Dichelobacter nodosus (strain VCS1703A).